A 1307-amino-acid polypeptide reads, in one-letter code: Contactin-associated protein like 5-3 (1307 aa).

A signal peptide spans 1–24 (MDFVPRLNSVLTLVLSGLWHFGLT). Over 25–1238 (ATNCDNCDDP…PLTNAVLSDS (1214 aa)) the chain is Extracellular. Residues 31 to 175 (CDDPLASFLS…IGMRMEVYGC (145 aa)) enclose the F5/8 type C domain. A disulfide bridge links C31 with C175. 2 Laminin G-like domains span residues 181-361 (VADF…TFSC) and 368-545 (PITF…IDLC). N-linked (GlcNAc...) asparagine glycosylation occurs at N283. A disulfide bond links C330 and C361. N-linked (GlcNAc...) asparagine glycosylation is present at N497. 4 disulfide bridges follow: C513/C545, C551/C562, C556/C571, and C573/C583. Positions 547 to 584 (IKDRCLPNYCEHGGHCVQTWTTFYCNCSNTGYTGATCH) constitute an EGF-like 1 domain. The region spanning 585–792 (DSIYEQSCEV…LRCYGDRHFW (208 aa)) is the Fibrinogen C-terminal domain. Residues N600, N624, and N637 are each glycosylated (N-linked (GlcNAc...) asparagine). The 166-residue stretch at 793-958 (NAVSFSTEAS…MVTSGVRPGC (166 aa)) folds into the Laminin G-like 3 domain. 5 cysteine pairs are disulfide-bonded: C931–C958, C962–C975, C969–C984, C986–C996, and C1165–C1200. Positions 959-997 (PGHCSSYGNNCHNGGKCVEKHNSYSCDCTKSPYEGPFCQ) constitute an EGF-like 2 domain. The region spanning 1019-1200 (PVSKNTSTSS…VQGSLREFSC (182 aa)) is the Laminin G-like 4 domain. The chain crosses the membrane as a helical span at residues 1239-1259 (AVIGGVIAVVTFITFCVIGIM). Residues 1260-1307 (TRFLYQHKQSHCTSQKKEKEYSENLDSSFRHDIDLQSTTSKCKREYFI) are Cytoplasmic-facing.

Belongs to the neurexin family.

The protein localises to the membrane. Functionally, may play a role in the correct development and proper functioning of the peripheral and central nervous system and be involved in cell adhesion and intercellular communication. This chain is Contactin-associated protein like 5-3 (Cntnap5c), found in Rattus norvegicus (Rat).